Reading from the N-terminus, the 263-residue chain is Lens fiber major intrinsic protein (263 aa).

Over 1–9 (MWELRSASF) the chain is Cytoplasmic. The chain crosses the membrane as a helical span at residues 10 to 29 (WRAICAEFFASLFYVFFGLG). The Extracellular portion of the chain corresponds to 30–41 (ASLRWAPGPLHV). The chain crosses the membrane as a helical span at residues 42–59 (LQVALAFGLALATLVQAV). The Cytoplasmic segment spans residues 60 to 61 (GH). Residues 62–77 (ISGAHVNPAVTFAFLV) constitute an intramembrane region (discontinuously helical). The NPA 1 motif lies at 68-70 (NPA). The Cytoplasmic segment spans residues 78 to 82 (GSQMS). The helical transmembrane segment at 83 to 106 (LLRAICYMVAQLLGAVAGAAVLYS) threads the bilayer. At 107–127 (VTPPAVRGNLALNTLHPGVSV) the chain is on the extracellular side. The chain crosses the membrane as a helical span at residues 128–148 (GQATIVEIFLTLQFVLCIFAT). The Cytoplasmic segment spans residues 149-156 (YDERRNGR). Residues 157–175 (LGSVALAVGFSLTLGHLFG) form a helical membrane-spanning segment. Topologically, residues 176–178 (MYY) are extracellular. The discontinuously helical intramembrane region spans 179 to 193 (TGAGMNPARSFAPAI). Positions 184–186 (NPA) match the NPA 2 motif. The Extracellular portion of the chain corresponds to 194–200 (LTRNFTN). Residues 201–222 (HWVYWVGPVIGAGLGSLLYDFL) form a helical membrane-spanning segment. At 223 to 263 (LFPRLKSVSERLSILKGSRPSESNGQPEVTGEPVELKTQAL) the chain is on the cytoplasmic side. Positions 227–237 (LKSVSERLSIL) are interaction with CALM. At Ser235 the chain carries Phosphoserine. A disordered region spans residues 239–263 (GSRPSESNGQPEVTGEPVELKTQAL). A Phosphoserine; by PKA modification is found at Ser243. The residue at position 245 (Ser245) is a Phosphoserine. Asn246 carries the post-translational modification Deamidated asparagine.

The protein belongs to the MIP/aquaporin (TC 1.A.8) family. In terms of assembly, homotetramer; each monomer provides an independent water pore. Two homotetramers on opposing membranes can dimerize, forming a cell-cell junction. Interacts with CALM; the calcium-calmodulin/CALM complex interacts with the cytoplasmic domains of two aquaporins, leading to channel closure. Interacts with BFSP1 (via C-terminus); prevents calcium-dependent inhibition of the water channel activity. In terms of processing, fatty acylated at Met-1 and Lys-238. The acyl modifications, in decreasing order of ion abundance, are: oleoyl (C18:1) &gt; palmitoyl (C16:0) &gt; stearoyl (C18:0) &gt; eicosenoyl (C20:1) &gt; dihomo-gamma-linolenoyl (C20:3) &gt; palmitoleoyl (C16:1) &gt; eicosadienoyl (C20:2). Post-translationally, subject to partial proteolytic cleavage in the eye lens core. Partial proteolysis promotes interactions between tetramers from adjoining membranes. As to expression, major component of lens fiber junctions.

The protein localises to the cell membrane. The protein resides in the cell junction. The catalysed reaction is H2O(in) = H2O(out). Its activity is regulated as follows. The water channel activity is inhibited by calcium through calmodulin/CALM. In terms of biological role, aquaporins form homotetrameric transmembrane channels, with each monomer independently mediating water transport across the plasma membrane along its osmotic gradient. Specifically expressed in lens fiber cells, this aquaporin is crucial for maintaining lens water homeostasis and transparency. Beyond water permeability, it also acts as a cell-to-cell adhesion molecule, forming thin junctions between lens fiber cells that are essential for maintaining the ordered structure and transparency of the lens. This Bos taurus (Bovine) protein is Lens fiber major intrinsic protein.